The sequence spans 69 residues: Arabinogalactan protein 24 (69 aa).

A signal peptide spans 1-25 (MMMMTKMFVQIAVVCLLATMAVVSA). A 4-hydroxyproline mark is found at Pro34, Pro36, Pro38, and Pro40. Pro34, Pro36, Pro38, and Pro40 each carry an O-linked (Ara...) hydroxyproline glycan. A lipid anchor (GPI-anchor amidated serine) is attached at Ser42. Residues 43 to 69 (SSTVVSATNMFTVLAIAAVALVVGSNH) constitute a propeptide, removed in mature form.

The protein belongs to the AG-peptide AGP family. Post-translationally, contains 4-hydroxyproline; hydroxylated on Pro-34, Pro-36, Pro-38 and Pro-40. O-glycosylated on hydroxyprolines; noncontiguous hydroxylproline residues are glycosylated with arabinogalactan.

It localises to the cell membrane. Its function is as follows. Proteoglycan that seems to be implicated in diverse developmental roles such as differentiation, cell-cell recognition, embryogenesis and programmed cell death. The polypeptide is Arabinogalactan protein 24 (Arabidopsis thaliana (Mouse-ear cress)).